Here is a 1021-residue protein sequence, read N- to C-terminus: Ephrin type-B receptor 6 (1021 aa).

Residues 1–31 (MATEGAAQLGNRVAGMVCSLWVLLLVSSVLA) form the signal peptide. At 32–594 (LEEVLLDTTG…LSSQLPERLS (563 aa)) the chain is on the extracellular side. The Eph LBD domain maps to 33–237 (EEVLLDTTGE…FSYTCPAVLR (205 aa)). Positions 163 to 182 (SFPSSSSSSSSSSSAAWAVG) are disordered. The segment covering 166 to 176 (SSSSSSSSSSS) has biased composition (low complexity). 2 consecutive Fibronectin type-III domains span residues 369-486 (PPSA…TSHE) and 487-582 (VPSA…TLPQ). Asn480 carries an N-linked (GlcNAc...) asparagine glycan. The helical transmembrane segment at 595 to 615 (LVIGSILGALAFLLLAAITVL) threads the bilayer. Residues 616 to 1021 (AVVFQRKRRG…HLRQQGSVEV (406 aa)) lie on the Cytoplasmic side of the membrane. Positions 670 to 919 (IKIEEVIGTG…QLVAAFDKMI (250 aa)) constitute a Protein kinase domain. Residue 676-684 (IGTGSFGEV) participates in ATP binding. The SAM domain occupies 948–1012 (PCLDSPQAWL…LHHIQLLQQH (65 aa)). The PDZ-binding signature appears at 1019-1021 (VEV).

Belongs to the protein kinase superfamily. Tyr protein kinase family. Ephrin receptor subfamily. As to quaternary structure, interacts with CBL and EPHB1. Interacts with FYN; this interaction takes place in a ligand-independent manner. In terms of processing, ligand-binding increases phosphorylation on tyrosine residues. Phosphorylation on tyrosine residues is mediated by transphosphorylation by the catalytically active EPHB1 in a ligand-independent manner. Tyrosine phosphorylation of the receptor may act as a switch on the functional transition from cell adhesion/attraction to de-adhesion/repulsion. In terms of tissue distribution, expressed in brain. Expressed in non invasive breast carcinoma cell lines (at protein level). Strong expression in brain and pancreas, and weak expression in other tissues, such as heart, placenta, lung, liver, skeletal muscle and kidney. Expressed in breast non invasive tumors but not in metastatic lesions. Isoform 3 is expressed in cell lines of glioblastomas, anaplastic astrocytomas, gliosarcomas and astrocytomas. Isoform 3 is not detected in normal tissues.

It localises to the membrane. It is found in the secreted. Functionally, kinase-defective receptor for members of the ephrin-B family. Binds to ephrin-B1 and ephrin-B2. Modulates cell adhesion and migration by exerting both positive and negative effects upon stimulation with ephrin-B2. Inhibits JNK activation, T-cell receptor-induced IL-2 secretion and CD25 expression upon stimulation with ephrin-B2. This chain is Ephrin type-B receptor 6 (EPHB6), found in Homo sapiens (Human).